The sequence spans 467 residues: Glycosyl hydrolase family 109 protein 1 (467 aa).

The N-terminal stretch at 1–22 (MKKLLLNTLIGLALLTCQTSFA) is a signal peptide. NAD(+)-binding positions include 66 to 67 (MR), D88, 137 to 140 (WKHH), 157 to 158 (EV), and N186. Substrate is bound by residues Y215, R231, 243-246 (YATH), and Y321. Y243 is a binding site for NAD(+).

The protein belongs to the Gfo/Idh/MocA family. Glycosyl hydrolase 109 subfamily. NAD(+) serves as cofactor.

Its function is as follows. Glycosidase. The polypeptide is Glycosyl hydrolase family 109 protein 1 (Bacteroides thetaiotaomicron (strain ATCC 29148 / DSM 2079 / JCM 5827 / CCUG 10774 / NCTC 10582 / VPI-5482 / E50)).